Here is a 254-residue protein sequence, read N- to C-terminus: Phosphoribosylaminoimidazole-succinocarboxamide synthase (254 aa).

It belongs to the SAICAR synthetase family.

The catalysed reaction is 5-amino-1-(5-phospho-D-ribosyl)imidazole-4-carboxylate + L-aspartate + ATP = (2S)-2-[5-amino-1-(5-phospho-beta-D-ribosyl)imidazole-4-carboxamido]succinate + ADP + phosphate + 2 H(+). It functions in the pathway purine metabolism; IMP biosynthesis via de novo pathway; 5-amino-1-(5-phospho-D-ribosyl)imidazole-4-carboxamide from 5-amino-1-(5-phospho-D-ribosyl)imidazole-4-carboxylate: step 1/2. The sequence is that of Phosphoribosylaminoimidazole-succinocarboxamide synthase from Brucella canis (strain ATCC 23365 / NCTC 10854 / RM-666).